A 194-amino-acid chain; its full sequence is CD-NTase-associated protein 15 (194 aa).

The required for cell toxicity stretch occupies residues 1 to 73 (MRMWELLPSK…DYLKHKFCPD (73 aa)). Transmembrane regions (helical) follow at residues 15-35 (ISTI…GQPV) and 43-63 (ITTI…YFYI).

The protein belongs to the CBASS Cap15 membrane effector family. As to quaternary structure, the beta barrel domain oligomerizes; in the presence of cyclic nucleotides (probably 3',3'-cGAMP, but the cognate CD-NTase makes at least 4 other cyclic nucleotides) higher-level oligomers are detected.

Its subcellular location is the cell inner membrane. Its function is as follows. Effector protein of a CBASS antivirus system. CBASS (cyclic oligonucleotide-based antiphage signaling system) provides immunity against bacteriophages. The CD-NTase protein (CdnB) synthesizes cyclic nucleotides in response to infection; these serve as specific second messenger signals. The signals activate a diverse range of effectors, leading to bacterial cell death and thus abortive phage infection. Causes cell death in response to 3',3'-cGAMP upon coexpression in E.coli with V.cholerae DncV; inactivating DncV prevents cell death. Upon induction in E.coli with non-cognate DncV, the cell inner membrane shrinks and separates from the cell wall with a concomitant increase in the periplasm. Binds cyclic nucleotide second messenger 3',3'-cGAMP, probably oligomerizing, and induces cell membrane shrinkage and rupture, leading to cell death. A type I CBASS system. In terms of biological role, protects E.coli against phage infection. When the CBASS operon (cdnB-cap15) is introduced in E.coli MG1655 there is about 100-fold protection against phage T2 and about 10-fold protection against phage T5 and T6. The chain is CD-NTase-associated protein 15 from Escherichia albertii.